A 396-amino-acid polypeptide reads, in one-letter code: Methionine import ATP-binding protein MetN 2 (396 aa).

The ABC transporter domain maps to 41 to 280 (VSFELVGKVF…PRHGATRALL (240 aa)). 77 to 84 (GRSGAGKS) provides a ligand contact to ATP.

It belongs to the ABC transporter superfamily. Methionine importer (TC 3.A.1.24) family. The complex is composed of two ATP-binding proteins (MetN), two transmembrane proteins (MetI) and a solute-binding protein (MetQ).

The protein resides in the cell inner membrane. The catalysed reaction is L-methionine(out) + ATP + H2O = L-methionine(in) + ADP + phosphate + H(+). The enzyme catalyses D-methionine(out) + ATP + H2O = D-methionine(in) + ADP + phosphate + H(+). Its function is as follows. Part of the ABC transporter complex MetNIQ involved in methionine import. Responsible for energy coupling to the transport system. The protein is Methionine import ATP-binding protein MetN 2 of Burkholderia pseudomallei (strain 1710b).